The chain runs to 289 residues: Protease HtpX (289 aa).

The next 2 membrane-spanning stretches (helical) occupy residues 7–27 and 38–58; these read LFLL…NIIF and GGIL…SLFM. H144 contacts Zn(2+). Residue E145 is part of the active site. Residue H148 participates in Zn(2+) binding. The next 2 membrane-spanning stretches (helical) occupy residues 155–175 and 194–214; these read VTMT…SRII and LVFW…ATMI. E223 is a binding site for Zn(2+).

This sequence belongs to the peptidase M48B family. Zn(2+) is required as a cofactor.

It localises to the cell inner membrane. This is Protease HtpX from Actinobacillus pleuropneumoniae serotype 5b (strain L20).